A 391-amino-acid chain; its full sequence is Decapping nuclease RAI1 (391 aa).

Residue glutamate 174 participates in a divalent metal cation binding. Glutamate 223 contacts substrate. Aspartate 225, glutamate 244, and leucine 245 together coordinate a divalent metal cation. Residues lysine 246 and glutamine 270 each coordinate substrate.

This sequence belongs to the DXO/Dom3Z family. As to quaternary structure, interacts with RAT1; the interaction is direct, stabilizes RAT1 protein structure and stimulates its exoribonuclease activity. The interaction also stimulates RAI1 pyrophosphohydrolase activity, probably by recruiting it to mRNA substrates. It depends on a divalent metal cation as a cofactor.

It is found in the nucleus. The catalysed reaction is a 5'-end NAD(+)-phospho-ribonucleoside in mRNA + H2O = a 5'-end phospho-ribonucleoside in mRNA + NAD(+) + H(+). The enzyme catalyses a 5'-end (N(7)-methyl 5'-triphosphoguanosine)-ribonucleoside-ribonucleotide in mRNA + H2O = a (N(7)-methyl 5'-triphosphoguanosine)-nucleoside + a 5'-end phospho-ribonucleoside in mRNA + H(+). It carries out the reaction a 5'-end triphospho-ribonucleoside in mRNA + H2O = a 5'-end phospho-ribonucleoside in mRNA + diphosphate + H(+). In terms of biological role, decapping enzyme for NAD-capped RNAs: specifically hydrolyzes the nicotinamide adenine dinucleotide (NAD) cap from a subset of RNAs by removing the entire NAD moiety from the 5'-end of an NAD-capped RNA. The NAD-cap is present at the 5'-end of some RNAs and snoRNAs. In contrast to the canonical 5'-end N7 methylguanosine (m7G) cap, the NAD cap promotes mRNA decay. Also acts as a non-canonical decapping enzyme that removes the entire cap structure of m7G capped or incompletely capped RNAs. Has decapping activity toward incomplete 5'-end m7G cap mRNAs such as unmethylated 5'-end-capped RNA (cap0), while it has no activity toward 2'-O-ribose methylated m7G cap (cap1). Also possesses RNA 5'-pyrophosphohydrolase activity by hydrolyzing the 5'-end triphosphate to release pyrophosphates. Stimulates exoribonuclease activity of Rat1, allowing it to degrade RNAs with stable secondary structure more effectively. The sequence is that of Decapping nuclease RAI1 from Candida albicans (strain SC5314 / ATCC MYA-2876) (Yeast).